A 104-amino-acid chain; its full sequence is Pyrimidine/purine nucleoside phosphorylase (104 aa).

This sequence belongs to the nucleoside phosphorylase PpnP family.

The catalysed reaction is a purine D-ribonucleoside + phosphate = a purine nucleobase + alpha-D-ribose 1-phosphate. The enzyme catalyses adenosine + phosphate = alpha-D-ribose 1-phosphate + adenine. It carries out the reaction cytidine + phosphate = cytosine + alpha-D-ribose 1-phosphate. It catalyses the reaction guanosine + phosphate = alpha-D-ribose 1-phosphate + guanine. The catalysed reaction is inosine + phosphate = alpha-D-ribose 1-phosphate + hypoxanthine. The enzyme catalyses thymidine + phosphate = 2-deoxy-alpha-D-ribose 1-phosphate + thymine. It carries out the reaction uridine + phosphate = alpha-D-ribose 1-phosphate + uracil. It catalyses the reaction xanthosine + phosphate = alpha-D-ribose 1-phosphate + xanthine. Its function is as follows. Catalyzes the phosphorolysis of diverse nucleosides, yielding D-ribose 1-phosphate and the respective free bases. Can use uridine, adenosine, guanosine, cytidine, thymidine, inosine and xanthosine as substrates. Also catalyzes the reverse reactions. This Janthinobacterium sp. (strain Marseille) (Minibacterium massiliensis) protein is Pyrimidine/purine nucleoside phosphorylase.